Reading from the N-terminus, the 128-residue chain is UPF0325 protein YaeH (128 aa).

It belongs to the UPF0325 family.

The protein is UPF0325 protein YaeH of Salmonella agona (strain SL483).